Here is a 94-residue protein sequence, read N- to C-terminus: Mitochondrial import inner membrane translocase subunit Tim8 A (94 aa).

The Twin CX3C motif signature appears at 47 to 70 (CWDKCIDRPGNKLDSRTESCLVSC). 2 disulfide bridges follow: cysteine 47–cysteine 70 and cysteine 51–cysteine 66.

The protein belongs to the small Tim family. In terms of assembly, heterohexamer; composed of 3 copies of TIMM8A and 3 copies of TIMM13, named soluble 70 kDa complex. Associates with the TIM22 complex, whose core is composed of TIMM22.

Its subcellular location is the mitochondrion inner membrane. In terms of biological role, mitochondrial intermembrane chaperone that participates in the import and insertion of some multi-pass transmembrane proteins into the mitochondrial inner membrane. Also required for the transfer of beta-barrel precursors from the TOM complex to the sorting and assembly machinery (SAM complex) of the outer membrane. Acts as a chaperone-like protein that protects the hydrophobic precursors from aggregation and guide them through the mitochondrial intermembrane space. The TIMM8-TIMM13 complex mediates the import of some proteins while the predominant TIMM9-TIMM10 70 kDa complex mediates the import of much more proteins. This is Mitochondrial import inner membrane translocase subunit Tim8 A (timm8a) from Xenopus laevis (African clawed frog).